The following is a 252-amino-acid chain: Eukaryotic translation initiation factor 3 subunit K (252 aa).

The 180-residue stretch at phenylalanine 46–glutamate 225 folds into the PCI domain.

It belongs to the eIF-3 subunit K family. Component of the eukaryotic translation initiation factor 3 (eIF-3) complex.

Its subcellular location is the cytoplasm. Functionally, component of the eukaryotic translation initiation factor 3 (eIF-3) complex, which is involved in protein synthesis of a specialized repertoire of mRNAs and, together with other initiation factors, stimulates binding of mRNA and methionyl-tRNAi to the 40S ribosome. The eIF-3 complex specifically targets and initiates translation of a subset of mRNAs involved in cell proliferation. The sequence is that of Eukaryotic translation initiation factor 3 subunit K from Aspergillus terreus (strain NIH 2624 / FGSC A1156).